The chain runs to 638 residues: 1-deoxy-D-xylulose-5-phosphate synthase (638 aa).

Thiamine diphosphate-binding positions include H72 and 113-115 (GHA). Position 144 (D144) interacts with Mg(2+). Thiamine diphosphate is bound by residues 145-146 (GA), N174, Y287, and E370. Mg(2+) is bound at residue N174.

Belongs to the transketolase family. DXPS subfamily. In terms of assembly, homodimer. Mg(2+) is required as a cofactor. It depends on thiamine diphosphate as a cofactor.

The catalysed reaction is D-glyceraldehyde 3-phosphate + pyruvate + H(+) = 1-deoxy-D-xylulose 5-phosphate + CO2. It functions in the pathway metabolic intermediate biosynthesis; 1-deoxy-D-xylulose 5-phosphate biosynthesis; 1-deoxy-D-xylulose 5-phosphate from D-glyceraldehyde 3-phosphate and pyruvate: step 1/1. Its function is as follows. Catalyzes the acyloin condensation reaction between C atoms 2 and 3 of pyruvate and glyceraldehyde 3-phosphate to yield 1-deoxy-D-xylulose-5-phosphate (DXP). This is 1-deoxy-D-xylulose-5-phosphate synthase from Picosynechococcus sp. (strain ATCC 27264 / PCC 7002 / PR-6) (Agmenellum quadruplicatum).